Consider the following 229-residue polypeptide: Uracil-DNA glycosylase (229 aa).

Catalysis depends on aspartate 64, which acts as the Proton acceptor.

Belongs to the uracil-DNA glycosylase (UDG) superfamily. UNG family.

Its subcellular location is the cytoplasm. It carries out the reaction Hydrolyzes single-stranded DNA or mismatched double-stranded DNA and polynucleotides, releasing free uracil.. Functionally, excises uracil residues from the DNA which can arise as a result of misincorporation of dUMP residues by DNA polymerase or due to deamination of cytosine. The protein is Uracil-DNA glycosylase of Geobacillus thermodenitrificans (strain NG80-2).